A 347-amino-acid chain; its full sequence is Nicotinate-nucleotide--dimethylbenzimidazole phosphoribosyltransferase (347 aa).

The active-site Proton acceptor is the Glu316.

Belongs to the CobT family.

The enzyme catalyses 5,6-dimethylbenzimidazole + nicotinate beta-D-ribonucleotide = alpha-ribazole 5'-phosphate + nicotinate + H(+). It participates in nucleoside biosynthesis; alpha-ribazole biosynthesis; alpha-ribazole from 5,6-dimethylbenzimidazole: step 1/2. Its function is as follows. Catalyzes the synthesis of alpha-ribazole-5'-phosphate from nicotinate mononucleotide (NAMN) and 5,6-dimethylbenzimidazole (DMB). The sequence is that of Nicotinate-nucleotide--dimethylbenzimidazole phosphoribosyltransferase from Vibrio campbellii (strain ATCC BAA-1116).